Reading from the N-terminus, the 187-residue chain is Benzene 1,2-dioxygenase subunit beta (187 aa).

This sequence belongs to the bacterial ring-hydroxylating dioxygenase beta subunit family. This dioxygenase system consists of four proteins: the two subunits of the hydroxylase component (BedC1 and BedC2), a ferredoxin (BedB) and a ferredoxin reductase (BedA).

The catalysed reaction is benzene + NADH + O2 + H(+) = cis-1,2-dihydrobenzene-1,2-diol + NAD(+). The protein operates within aromatic compound metabolism; benzene degradation; catechol from benzene: step 1/2. Its function is as follows. The beta subunit may be responsible for the substrate specificity of the enzyme. The protein is Benzene 1,2-dioxygenase subunit beta (bedC2) of Pseudomonas putida (Arthrobacter siderocapsulatus).